The chain runs to 680 residues: DNA-directed RNA polymerase subunit beta' (680 aa).

Positions 69, 71, 87, and 90 each coordinate Zn(2+). Residues Asp-489, Asp-491, and Asp-493 each contribute to the Mg(2+) site.

Belongs to the RNA polymerase beta' chain family. RpoC1 subfamily. As to quaternary structure, in plastids the minimal PEP RNA polymerase catalytic core is composed of four subunits: alpha, beta, beta', and beta''. When a (nuclear-encoded) sigma factor is associated with the core the holoenzyme is formed, which can initiate transcription. Mg(2+) is required as a cofactor. It depends on Zn(2+) as a cofactor.

It localises to the plastid. It is found in the chloroplast. The enzyme catalyses RNA(n) + a ribonucleoside 5'-triphosphate = RNA(n+1) + diphosphate. In terms of biological role, DNA-dependent RNA polymerase catalyzes the transcription of DNA into RNA using the four ribonucleoside triphosphates as substrates. This chain is DNA-directed RNA polymerase subunit beta', found in Cucumis sativus (Cucumber).